The chain runs to 101 residues: HssA/B-like protein 40 (101 aa).

The disordered stretch occupies residues 1–26; it reads MTLFSSISSMSTSMSGSKSSISSFGS.

The protein belongs to the hssA/B family.

This chain is HssA/B-like protein 40 (hssl40), found in Dictyostelium discoideum (Social amoeba).